A 51-amino-acid chain; its full sequence is Insulin (51 aa).

3 cysteine pairs are disulfide-bonded: Cys-7/Cys-37, Cys-19/Cys-50, and Cys-36/Cys-41.

This sequence belongs to the insulin family. In terms of assembly, heterodimer of a B chain and an A chain linked by two disulfide bonds.

It localises to the secreted. Insulin decreases blood glucose concentration. It increases cell permeability to monosaccharides, amino acids and fatty acids. It accelerates glycolysis, the pentose phosphate cycle, and glycogen synthesis in liver. This chain is Insulin (INS), found in Anser anser anser (Western greylag goose).